The following is a 200-amino-acid chain: LexA repressor (200 aa).

Residues Ser121 and Lys158 each act as for autocatalytic cleavage activity in the active site.

This sequence belongs to the peptidase S24 family. As to quaternary structure, homodimer.

The catalysed reaction is Hydrolysis of Ala-|-Gly bond in repressor LexA.. In terms of biological role, binds a consensus sequence 5'-TGTTC-N(4)-GAACA-3'; some genes have a tandem consensus sequence and their binding is cooperative. Binds to the promoters of a number of genes, including lexA and splB. Represses a number of genes involved in the response to DNA damage (SOS response). The sequence is that of LexA repressor from Opitutus terrae (strain DSM 11246 / JCM 15787 / PB90-1).